The chain runs to 881 residues: Tyrosine-protein kinase receptor TYRO3 (881 aa).

The signal sequence occupies residues 1–28 (MVNPGPPGLIAGLLLAALSLSSVDGTKA). Ig-like C2-type domains lie at 29–114 (LGFV…KSVS) and 125–206 (PYFT…AIVE). Residues 29-414 (LGFVGHGYNM…QRHPHTRMSW (386 aa)) are Extracellular-facing. Residues Asn-37 and Asn-49 are each glycosylated (N-linked (GlcNAc...) asparagine). The cysteines at positions 50 and 103 are disulfide-linked. Asn-143 is a glycosylation site (N-linked (GlcNAc...) asparagine). A disulfide bridge connects residues Cys-146 and Cys-189. 2 consecutive Fibronectin type-III domains span residues 213–306 (PPFN…TKEK) and 311–401 (IPQN…SKEE). Asn-216, Asn-279, Asn-351, and Asn-365 each carry an N-linked (GlcNAc...) asparagine glycan. A helical membrane pass occupies residues 415 to 435 (VPMVLGILTALVTVVAMTLIF). The Cytoplasmic segment spans residues 436-881 (LRKGRKETRF…MQEEQVVITL (446 aa)). The Protein kinase domain maps to 503–774 (FTLGRTLGKG…VDLKRRLEAI (272 aa)). ATP is bound by residues 509 to 517 (LGKGEFGSV) and Lys-535. The active-site Proton acceptor is Asp-640. Tyr-671 is modified (phosphotyrosine; by autocatalysis). A disordered region spans residues 846 to 881 (EWSSSAQNGEARGLLHEEEEEEEEEEMQEEQVVITL). Positions 862–874 (EEEEEEEEEEMQE) are enriched in acidic residues.

Belongs to the protein kinase superfamily. Tyr protein kinase family. AXL/UFO subfamily. Post-translationally, tyrosine phosphorylated upon receptor stimulation.

Its subcellular location is the cell membrane. The enzyme catalyses L-tyrosyl-[protein] + ATP = O-phospho-L-tyrosyl-[protein] + ADP + H(+). Its function is as follows. May be involved in cell adhesion processes, particularly in the central nervous system. The chain is Tyrosine-protein kinase receptor TYRO3 (tyro3) from Xenopus tropicalis (Western clawed frog).